The primary structure comprises 298 residues: GTP cyclohydrolase FolE2 (298 aa).

Belongs to the GTP cyclohydrolase IV family.

The enzyme catalyses GTP + H2O = 7,8-dihydroneopterin 3'-triphosphate + formate + H(+). It participates in cofactor biosynthesis; 7,8-dihydroneopterin triphosphate biosynthesis; 7,8-dihydroneopterin triphosphate from GTP: step 1/1. Its function is as follows. Converts GTP to 7,8-dihydroneopterin triphosphate. The sequence is that of GTP cyclohydrolase FolE2 from Azotobacter vinelandii (strain DJ / ATCC BAA-1303).